The primary structure comprises 960 residues: Isoleucine--tRNA ligase (960 aa).

A 'HIGH' region motif is present at residues 60–70; it reads PYANGSLHIGH. Glu-573 is a binding site for L-isoleucyl-5'-AMP. The short motif at 614–618 is the 'KMSKS' region element; that stretch reads KMSKS. Lys-617 lines the ATP pocket. Cys-929, Cys-932, Cys-949, and Cys-952 together coordinate Zn(2+).

The protein belongs to the class-I aminoacyl-tRNA synthetase family. IleS type 1 subfamily. Monomer. Zn(2+) is required as a cofactor.

Its subcellular location is the cytoplasm. The catalysed reaction is tRNA(Ile) + L-isoleucine + ATP = L-isoleucyl-tRNA(Ile) + AMP + diphosphate. In terms of biological role, catalyzes the attachment of isoleucine to tRNA(Ile). As IleRS can inadvertently accommodate and process structurally similar amino acids such as valine, to avoid such errors it has two additional distinct tRNA(Ile)-dependent editing activities. One activity is designated as 'pretransfer' editing and involves the hydrolysis of activated Val-AMP. The other activity is designated 'posttransfer' editing and involves deacylation of mischarged Val-tRNA(Ile). The sequence is that of Isoleucine--tRNA ligase from Nostoc sp. (strain PCC 7120 / SAG 25.82 / UTEX 2576).